A 353-amino-acid chain; its full sequence is Heterogeneous nuclear ribonucleoproteins A2/B1 (353 aa).

The residue at position 1 (Met-1) is an N-acetylmethionine. Residue Thr-4 is modified to Phosphothreonine. Residue Leu-5 forms a Glycyl lysine isopeptide (Lys-Gly) (interchain with G-Cter in SUMO2) linkage. Positions 9-15 (PLERKKR) match the Nuclear localization signal motif. RRM domains lie at 21-104 (RKLF…ESGK) and 112-191 (KKLF…LSRQ). Lys-22 participates in a covalent cross-link: Glycyl lysine isopeptide (Lys-Gly) (interchain with G-Cter in SUMO2). Residue Ser-29 is modified to Phosphoserine. Omega-N-methylarginine is present on Arg-38. Ser-85 carries the phosphoserine modification. At Lys-104 the chain carries N6,N6-dimethyllysine; alternate. Lys-104 participates in a covalent cross-link: Glycyl lysine isopeptide (Lys-Gly) (interchain with G-Cter in SUMO2); alternate. Glycyl lysine isopeptide (Lys-Gly) (interchain with G-Cter in SUMO2) cross-links involve residues Lys-112, Lys-120, and Lys-137. Phosphothreonine is present on Thr-140. Ser-149 carries the post-translational modification Phosphoserine. A Glycyl lysine isopeptide (Lys-Gly) (interchain with G-Cter in SUMO2) cross-link involves residue Lys-152. Thr-159 carries the phosphothreonine modification. Residues Lys-168 and Lys-173 each participate in a glycyl lysine isopeptide (Lys-Gly) (interchain with G-Cter in SUMO2); alternate cross-link. An N6-acetyllysine; alternate mark is found at Lys-168 and Lys-173. Thr-176 is modified (phosphothreonine). Residue Lys-186 forms a Glycyl lysine isopeptide (Lys-Gly) (interchain with G-Cter in SUMO2) linkage. 2 positions are modified to phosphoserine: Ser-189 and Ser-201. The disordered stretch occupies residues 193–353 (MQEVQSSRSG…SGGYGGRSRY (161 aa)). Over residues 202–223 (GRGGNFGFGDSRGGGGNFGPGP) the composition is skewed to gly residues. Arg-203 carries the post-translational modification Asymmetric dimethylarginine; alternate. The residue at position 203 (Arg-203) is a Dimethylated arginine; alternate. Position 203 is an omega-N-methylarginine; alternate (Arg-203). Ser-212 bears the Phosphoserine mark. Arg-213 is modified (asymmetric dimethylarginine; alternate). Arg-213 bears the Dimethylated arginine; alternate mark. Arg-213 bears the Omega-N-methylarginine; alternate mark. Residue Ser-225 is modified to Phosphoserine. At Arg-228 the chain carries Omega-N-methylarginine. Ser-231 and Ser-236 each carry phosphoserine. Arg-238 is modified (omega-N-methylarginine). Ser-259 carries the post-translational modification Phosphoserine. Arg-266 is modified (asymmetric dimethylarginine; alternate). Omega-N-methylarginine; alternate is present on Arg-266. The tract at residues 308 to 347 (QQPSNYGPMKSGNFGGSRNMGGPYGGGNYGPGGSGGSGGY) is nuclear targeting sequence. The segment covering 320–353 (NFGGSRNMGGPYGGGNYGPGGSGGSGGYGGRSRY) has biased composition (gly residues). A Phosphoserine modification is found at Ser-324. Omega-N-methylarginine is present on Arg-325. Phosphotyrosine is present on Tyr-331. Ser-341 and Ser-344 each carry phosphoserine. Phosphotyrosine is present on Tyr-347. Arg-350 is modified (omega-N-methylarginine).

In terms of assembly, homodimer; dimerization is required for nucleocytoplasmic translocation. Identified in the spliceosome C complex. Identified in a IGF2BP1-dependent mRNP granule complex containing untranslated mRNAs. Interacts with IGF2BP1. Interacts with C9orf72. Interacts with DGCR8. Interacts with TARDBP. Interacts with CKAP5. Interacts with TBK1. Interacts with STING1. Interacts with SRC. Interacts with PPIA/CYPA. Interacts (via C-terminus) with FAM76B; the interaction results in retention of HNRNPA2B1 in the nucleus and inhibition of the NF-kappa-B-mediated inflammatory pathway. Interacts with NF-kappa-B inhibitors NFKBIA and NFKBIE; the interaction may be mediated by the RRM2 domain of HNRNPA2B1, and HNRNPA2B1 may interact simultaneously with FAM76B and either NFKBIA or NFKBIE to form a complex. Post-translationally, sumoylated in exosomes, promoting miRNAs-binding. In terms of processing, asymmetric dimethylation at Arg-266 constitutes the major methylation site. According to a report, methylation affects subcellular location and promotes nuclear localization. According to another report, methylation at Arg-266 does not influence nucleocytoplasmic shuttling.

Its subcellular location is the nucleus. The protein resides in the nucleoplasm. The protein localises to the cytoplasm. It is found in the cytoplasmic granule. It localises to the secreted. Its subcellular location is the extracellular exosome. Its function is as follows. Heterogeneous nuclear ribonucleoprotein (hnRNP) that associates with nascent pre-mRNAs, packaging them into hnRNP particles. The hnRNP particle arrangement on nascent hnRNA is non-random and sequence-dependent and serves to condense and stabilize the transcripts and minimize tangling and knotting. Packaging plays a role in various processes such as transcription, pre-mRNA processing, RNA nuclear export, subcellular location, mRNA translation and stability of mature mRNAs. Forms hnRNP particles with at least 20 other different hnRNP and heterogeneous nuclear RNA in the nucleus. Involved in transport of specific mRNAs to the cytoplasm in oligodendrocytes and neurons: acts by specifically recognizing and binding the A2RE (21 nucleotide hnRNP A2 response element) or the A2RE11 (derivative 11 nucleotide oligonucleotide) sequence motifs present on some mRNAs, and promotes their transport to the cytoplasm. Specifically binds single-stranded telomeric DNA sequences, protecting telomeric DNA repeat against endonuclease digestion. Also binds other RNA molecules, such as primary miRNA (pri-miRNAs): acts as a nuclear 'reader' of the N6-methyladenosine (m6A) mark by specifically recognizing and binding a subset of nuclear m6A-containing pri-miRNAs. Binding to m6A-containing pri-miRNAs promotes pri-miRNA processing by enhancing binding of DGCR8 to pri-miRNA transcripts. Involved in miRNA sorting into exosomes following sumoylation, possibly by binding (m6A)-containing pre-miRNAs. Acts as a regulator of efficiency of mRNA splicing, possibly by binding to m6A-containing pre-mRNAs. Plays a role in the splicing of pyruvate kinase PKM by binding repressively to sequences flanking PKM exon 9, inhibiting exon 9 inclusion and resulting in exon 10 inclusion and production of the PKM M2 isoform. Also plays a role in the activation of the innate immune response. Mechanistically, senses the presence of viral DNA in the nucleus, homodimerizes and is demethylated by JMJD6. In turn, translocates to the cytoplasm where it activates the TBK1-IRF3 pathway, leading to interferon alpha/beta production. Functionally, (Microbial infection) Involved in the transport of HIV-1 genomic RNA out of the nucleus, to the microtubule organizing center (MTOC), and then from the MTOC to the cytoplasm: acts by specifically recognizing and binding the A2RE (21 nucleotide hnRNP A2 response element) sequence motifs present on HIV-1 genomic RNA, and promotes its transport. In Homo sapiens (Human), this protein is Heterogeneous nuclear ribonucleoproteins A2/B1 (HNRNPA2B1).